The chain runs to 424 residues: UPF0229 protein ECA2349 (424 aa).

The segment at 53–111 (SIPNADINEPMFHQGRGGHRHRVHPGNDHFVQNDKIERPQGGGGSGSGQGDASKDGEGD) is disordered. Residues 77-90 (PGNDHFVQNDKIER) show a composition bias toward basic and acidic residues. Residues 92-101 (QGGGGSGSGQ) show a composition bias toward gly residues.

This sequence belongs to the UPF0229 family.

In Pectobacterium atrosepticum (strain SCRI 1043 / ATCC BAA-672) (Erwinia carotovora subsp. atroseptica), this protein is UPF0229 protein ECA2349.